Consider the following 266-residue polypeptide: GTP cyclohydrolase FolE2 1 (266 aa).

It belongs to the GTP cyclohydrolase IV family.

It catalyses the reaction GTP + H2O = 7,8-dihydroneopterin 3'-triphosphate + formate + H(+). Its pathway is cofactor biosynthesis; 7,8-dihydroneopterin triphosphate biosynthesis; 7,8-dihydroneopterin triphosphate from GTP: step 1/1. Converts GTP to 7,8-dihydroneopterin triphosphate. The chain is GTP cyclohydrolase FolE2 1 from Dechloromonas aromatica (strain RCB).